The primary structure comprises 745 residues: uncharacterized protein (745 aa).

An HTH araC/xylS-type domain is found at 158-256 (NQVCDYIELH…HQTPKQYRGD (99 aa)). 2 DNA-binding regions (H-T-H motif) span residues 175 to 196 (SELS…TESL) and 223 to 246 (ITDI…KHFT).

This is an uncharacterized protein from Staphylococcus aureus (strain Mu50 / ATCC 700699).